The primary structure comprises 302 residues: Recombination-associated protein RdgC (302 aa).

It belongs to the RdgC family.

It is found in the cytoplasm. The protein resides in the nucleoid. In terms of biological role, may be involved in recombination. This Haemophilus influenzae (strain PittGG) protein is Recombination-associated protein RdgC.